We begin with the raw amino-acid sequence, 489 residues long: Lysine--tRNA ligase (489 aa).

2 residues coordinate Mg(2+): E398 and E405.

It belongs to the class-II aminoacyl-tRNA synthetase family. As to quaternary structure, homodimer. Mg(2+) is required as a cofactor.

It is found in the cytoplasm. The catalysed reaction is tRNA(Lys) + L-lysine + ATP = L-lysyl-tRNA(Lys) + AMP + diphosphate. This Moorella thermoacetica (strain ATCC 39073 / JCM 9320) protein is Lysine--tRNA ligase.